Consider the following 378-residue polypeptide: Small RNA 2'-O-methyltransferase (378 aa).

Asp-61 lines the S-adenosyl-L-methionine pocket. Mg(2+) contacts are provided by Glu-114, Glu-117, His-118, and His-176.

The protein belongs to the methyltransferase superfamily. HEN1 family. It depends on Mg(2+) as a cofactor.

It is found in the cytoplasm. The catalysed reaction is small RNA 3'-end nucleotide + S-adenosyl-L-methionine = small RNA 3'-end 2'-O-methylnucleotide + S-adenosyl-L-homocysteine + H(+). Its function is as follows. Methyltransferase that adds a 2'-O-methyl group at the 3'-end of small RNAs. The chain is Small RNA 2'-O-methyltransferase from Schizosaccharomyces pombe (strain 972 / ATCC 24843) (Fission yeast).